Here is a 131-residue protein sequence, read N- to C-terminus: Spermatocyte protein spe-27 (131 aa).

Positions 1–17 (MNKSLIFLLSFAYSCYS) are cleaved as a signal peptide.

Functionally, required for spermiogenesis. This chain is Spermatocyte protein spe-27 (spe-27), found in Caenorhabditis elegans.